The following is a 179-amino-acid chain: Large ribosomal subunit protein bL25 (179 aa).

The protein belongs to the bacterial ribosomal protein bL25 family. CTC subfamily. As to quaternary structure, part of the 50S ribosomal subunit; part of the 5S rRNA/L5/L18/L25 subcomplex. Contacts the 5S rRNA. Binds to the 5S rRNA independently of L5 and L18.

Its function is as follows. This is one of the proteins that binds to the 5S RNA in the ribosome where it forms part of the central protuberance. This chain is Large ribosomal subunit protein bL25, found in Desulfitobacterium hafniense (strain DSM 10664 / DCB-2).